Consider the following 614-residue polypeptide: Protein YehQ (614 aa).

2 SWIM-type zinc fingers span residues 55-89 (VRTQ…LSYQ) and 151-185 (SDVR…QAFV).

The polypeptide is Protein YehQ (yehQ) (Escherichia coli (strain K12)).